The sequence spans 282 residues: 2-dehydro-3-deoxyphosphooctonate aldolase (282 aa).

The protein belongs to the KdsA family.

The protein resides in the cytoplasm. The catalysed reaction is D-arabinose 5-phosphate + phosphoenolpyruvate + H2O = 3-deoxy-alpha-D-manno-2-octulosonate-8-phosphate + phosphate. It participates in carbohydrate biosynthesis; 3-deoxy-D-manno-octulosonate biosynthesis; 3-deoxy-D-manno-octulosonate from D-ribulose 5-phosphate: step 2/3. It functions in the pathway bacterial outer membrane biogenesis; lipopolysaccharide biosynthesis. This is 2-dehydro-3-deoxyphosphooctonate aldolase from Shewanella sp. (strain MR-4).